A 445-amino-acid polypeptide reads, in one-letter code: Glucose-6-phosphate isomerase (445 aa).

Glu287 (proton donor) is an active-site residue. Residues His308 and Lys422 contribute to the active site.

This sequence belongs to the GPI family.

It is found in the cytoplasm. The catalysed reaction is alpha-D-glucose 6-phosphate = beta-D-fructose 6-phosphate. It functions in the pathway carbohydrate biosynthesis; gluconeogenesis. Its pathway is carbohydrate degradation; glycolysis; D-glyceraldehyde 3-phosphate and glycerone phosphate from D-glucose: step 2/4. Functionally, catalyzes the reversible isomerization of glucose-6-phosphate to fructose-6-phosphate. The chain is Glucose-6-phosphate isomerase from Bacteroides thetaiotaomicron (strain ATCC 29148 / DSM 2079 / JCM 5827 / CCUG 10774 / NCTC 10582 / VPI-5482 / E50).